The sequence spans 322 residues: (12E)-labda-8(17),12,14-triene synthase (322 aa).

A compositionally biased stretch (polar residues) spans 1 to 11 (MNDATRTSTTP). A disordered region spans residues 1-26 (MNDATRTSTTPPALPMPDLRDSFPGP). Residues aspartate 93 and glutamate 98 each coordinate Mg(2+). The DDXXXE motif signature appears at 93 to 98 (DDAHGE). Arginine 188 is a binding site for substrate. Mg(2+)-binding residues include asparagine 234 and serine 238. The short motif at 234 to 242 (NDLASYAKE) is the NXXXSXXXE motif element. Lysine 241 is a binding site for substrate. Residue glutamate 242 coordinates Mg(2+). Residue 319 to 320 (RY) coordinates substrate.

It belongs to the terpene synthase family. The cofactor is Mg(2+).

The catalysed reaction is (+)-copalyl diphosphate = (12E)-labda-8(17),12,14-triene + diphosphate. Its function is as follows. Involved in the biosynthesis of the labdane-type bicyclic diterpene labda-8(17),12(E),14-triene. Catalyzes the conversion of (+)-copalyl diphosphate to yield labda-8(17),12(E),14-triene. The sequence is that of (12E)-labda-8(17),12,14-triene synthase from Streptomyces anulatus (Streptomyces chrysomallus).